The chain runs to 443 residues: Ribulose bisphosphate carboxylase large chain (443 aa).

Residues N89 and T139 each contribute to the substrate site. Residue K141 is the Proton acceptor of the active site. K143 contributes to the substrate binding site. Positions 167, 169, and 170 each coordinate Mg(2+). Residue K167 is modified to N6-carboxylysine. The active-site Proton acceptor is the H260. 3 residues coordinate substrate: R261, H293, and S345.

Belongs to the RuBisCO large chain family. Type I subfamily. In terms of assembly, heterohexadecamer of 8 large chains and 8 small chains; disulfide-linked. The disulfide link is formed within the large subunit homodimers. It depends on Mg(2+) as a cofactor. The disulfide bond which can form in the large chain dimeric partners within the hexadecamer appears to be associated with oxidative stress and protein turnover.

Its subcellular location is the plastid. It is found in the chloroplast. It carries out the reaction 2 (2R)-3-phosphoglycerate + 2 H(+) = D-ribulose 1,5-bisphosphate + CO2 + H2O. The enzyme catalyses D-ribulose 1,5-bisphosphate + O2 = 2-phosphoglycolate + (2R)-3-phosphoglycerate + 2 H(+). RuBisCO catalyzes two reactions: the carboxylation of D-ribulose 1,5-bisphosphate, the primary event in carbon dioxide fixation, as well as the oxidative fragmentation of the pentose substrate in the photorespiration process. Both reactions occur simultaneously and in competition at the same active site. The chain is Ribulose bisphosphate carboxylase large chain from Antirrhinum majus (Garden snapdragon).